Consider the following 176-residue polypeptide: Translation initiation factor IF-3 (176 aa).

Belongs to the IF-3 family. Monomer.

It is found in the cytoplasm. In terms of biological role, IF-3 binds to the 30S ribosomal subunit and shifts the equilibrium between 70S ribosomes and their 50S and 30S subunits in favor of the free subunits, thus enhancing the availability of 30S subunits on which protein synthesis initiation begins. The polypeptide is Translation initiation factor IF-3 (Streptococcus agalactiae serotype Ia (strain ATCC 27591 / A909 / CDC SS700)).